A 429-amino-acid chain; its full sequence is MTQMEEAKRGVITEEMKKIAKIEKIDPEKLRRSVAKGHTVIFRNVNHDWVVPVAVGQGVRVKVNANIGTSRDIVNVEEEIEKAKIAVKYGADTIMDLSTGGDLDFIRRKIMKAVNVPVGTVPIYQAAEEMLARGKAIIEMTEDDMWKAVEKHFKDGVDFVTIHAGVTKEVVEKLKRVNRVVGMVSRGGTFLAAWILHWGEENPFYKNYEYLLELAKEYDVVLSLGDGLRPGGLPDAGDELQIAELYTIGRLVKRAREFGVQTMVEGPGHVPIDQIPTHIRLMKIASDNAPVYVLGPIVTDIFPGYDHISAAIGGAIAALNGADFLCYVTPAEHLGLPTIEHVKEGVIATKIAAHAVNLTRFEEDFKIDYQMSLARGKLNWKEQFKIAFDKEKFIEIRKERPTKSEACSMCGDLCAIKIVREMLGHKARS.

Residues Asn66, Met95, Tyr124, His163, 185 to 187 (SRG), 226 to 229 (DGLR), and Glu265 each bind substrate. His269 lines the Zn(2+) pocket. Tyr292 contributes to the substrate binding site. His333 is a binding site for Zn(2+). [4Fe-4S] cluster-binding residues include Cys407, Cys410, and Cys414.

This sequence belongs to the ThiC family. The cofactor is [4Fe-4S] cluster.

It catalyses the reaction 5-amino-1-(5-phospho-beta-D-ribosyl)imidazole + S-adenosyl-L-methionine = 4-amino-2-methyl-5-(phosphooxymethyl)pyrimidine + CO + 5'-deoxyadenosine + formate + L-methionine + 3 H(+). It functions in the pathway cofactor biosynthesis; thiamine diphosphate biosynthesis. Functionally, catalyzes the synthesis of the hydroxymethylpyrimidine phosphate (HMP-P) moiety of thiamine from aminoimidazole ribotide (AIR) in a radical S-adenosyl-L-methionine (SAM)-dependent reaction. In Pyrococcus furiosus (strain ATCC 43587 / DSM 3638 / JCM 8422 / Vc1), this protein is Phosphomethylpyrimidine synthase.